The sequence spans 141 residues: Hemoglobin subunit alpha (141 aa).

One can recognise a Globin domain in the interval 1-141 (VLSDEDKTNV…VSTVLTSKYR (141 aa)). Ser-3 is subject to Phosphoserine. The residue at position 7 (Lys-7) is an N6-succinyllysine. The residue at position 8 (Thr-8) is a Phosphothreonine. Position 11 is an N6-succinyllysine (Lys-11). The residue at position 16 (Lys-16) is an N6-acetyllysine; alternate. Lys-16 carries the N6-succinyllysine; alternate modification. The residue at position 24 (Tyr-24) is a Phosphotyrosine. A Phosphoserine modification is found at Ser-35. Lys-40 carries the N6-succinyllysine modification. Phosphoserine is present on Ser-49. His-58 contributes to the O2 binding site. Heme b is bound at residue His-87. Position 102 is a phosphoserine (Ser-102). Thr-108 carries the phosphothreonine modification. 2 positions are modified to phosphoserine: Ser-124 and Ser-131. 2 positions are modified to phosphothreonine: Thr-134 and Thr-137. Residue Ser-138 is modified to Phosphoserine.

It belongs to the globin family. As to quaternary structure, heterotetramer of two alpha chains and two beta chains. Red blood cells.

In terms of biological role, involved in oxygen transport from the lung to the various peripheral tissues. Hemopressin acts as an antagonist peptide of the cannabinoid receptor CNR1. Hemopressin-binding efficiently blocks cannabinoid receptor CNR1 and subsequent signaling. This Trichechus inunguis (Amazon manatee) protein is Hemoglobin subunit alpha (HBA).